Consider the following 122-residue polypeptide: MMGVVSTPKVVGRQVYGSLYECDNEVLKDVKRLEEIVKEAAKVGNMTLLDIKSWKIGEGVSVVAIVLESHITIHTWPEYNFATVDVYSCGAHTDPYKAFMYIVNELKAKRYTINEADRSSEF.

Serine 69 functions as the Schiff-base intermediate with substrate; via pyruvic acid in the catalytic mechanism. The residue at position 69 (serine 69) is a Pyruvic acid (Ser); by autocatalysis. The active-site Proton acceptor; for processing activity is histidine 74. Catalysis depends on cysteine 89, which acts as the Proton donor; for catalytic activity.

This sequence belongs to the prokaryotic AdoMetDC family. Type 1 subfamily. Heterotetramer of two alpha and two beta chains arranged as a dimer of alpha/beta heterodimers. Pyruvate is required as a cofactor. In terms of processing, is synthesized initially as an inactive proenzyme. Formation of the active enzyme involves a self-maturation process in which the active site pyruvoyl group is generated from an internal serine residue via an autocatalytic post-translational modification. Two non-identical subunits are generated from the proenzyme in this reaction, and the pyruvate is formed at the N-terminus of the alpha chain, which is derived from the carboxyl end of the proenzyme. The post-translation cleavage follows an unusual pathway, termed non-hydrolytic serinolysis, in which the side chain hydroxyl group of the serine supplies its oxygen atom to form the C-terminus of the beta chain, while the remainder of the serine residue undergoes an oxidative deamination to produce ammonia and the pyruvoyl group blocking the N-terminus of the alpha chain.

It carries out the reaction S-adenosyl-L-methionine + H(+) = S-adenosyl 3-(methylsulfanyl)propylamine + CO2. The protein operates within amine and polyamine biosynthesis; S-adenosylmethioninamine biosynthesis; S-adenosylmethioninamine from S-adenosyl-L-methionine: step 1/1. In terms of biological role, catalyzes the decarboxylation of S-adenosylmethionine to S-adenosylmethioninamine (dcAdoMet), the propylamine donor required for the synthesis of the polyamines spermine and spermidine from the diamine putrescine. In Sulfurisphaera tokodaii (strain DSM 16993 / JCM 10545 / NBRC 100140 / 7) (Sulfolobus tokodaii), this protein is S-adenosylmethionine decarboxylase proenzyme.